Reading from the N-terminus, the 482-residue chain is Adenylosuccinate lyase (482 aa).

Substrate is bound by residues 14 to 15 (RY), 82 to 84 (RHD), and 108 to 109 (TS). Residue histidine 156 is the Proton donor/acceptor of the active site. Lysine 196 participates in a covalent cross-link: Glycyl lysine isopeptide (Lys-Gly) (interchain with G-Cter in ubiquitin). Substrate is bound at residue glutamine 238. Serine 286 acts as the Proton donor/acceptor in catalysis. Substrate contacts are provided by arginine 300, arginine 326, serine 331, and arginine 335.

The protein belongs to the lyase 1 family. Adenylosuccinate lyase subfamily. As to quaternary structure, homotetramer. Residues from neighboring subunits contribute catalytic and substrate-binding residues to each active site.

It carries out the reaction N(6)-(1,2-dicarboxyethyl)-AMP = fumarate + AMP. It catalyses the reaction (2S)-2-[5-amino-1-(5-phospho-beta-D-ribosyl)imidazole-4-carboxamido]succinate = 5-amino-1-(5-phospho-beta-D-ribosyl)imidazole-4-carboxamide + fumarate. The protein operates within purine metabolism; AMP biosynthesis via de novo pathway; AMP from IMP: step 2/2. It participates in purine metabolism; IMP biosynthesis via de novo pathway; 5-amino-1-(5-phospho-D-ribosyl)imidazole-4-carboxamide from 5-amino-1-(5-phospho-D-ribosyl)imidazole-4-carboxylate: step 2/2. In Saccharomyces cerevisiae (strain ATCC 204508 / S288c) (Baker's yeast), this protein is Adenylosuccinate lyase (ADE13).